The sequence spans 601 residues: Potassium channel KAT2 (601 aa).

Over 1 to 42 (METISNIFHNDPLPPLGARANQSIKLRKFIISPYDSRYRTWE) the chain is Cytoplasmic. A helical membrane pass occupies residues 43-63 (TFLLVLVVYSAWICPFELAYL). The Extracellular portion of the chain corresponds to 64–71 (RNLSWKVS). The helical transmembrane segment at 72–92 (LVDNIIDSFFAIDIILTFFLA) threads the bilayer. The Cytoplasmic portion of the chain corresponds to 93 to 112 (YLDQKSYLLVDDPKRIVARY). The helical transmembrane segment at 113–133 (FSSWFLFDVCSTIPYQLLGQI) threads the bilayer. At 134–144 (FKKHENGLAYR) the chain is on the extracellular side. Residues 145 to 165 (LLSMLRLWRLRRLSELFARLE) traverse the membrane as a helical; Voltage-sensor segment. Over 166–179 (KDIRLNYYWIRCTK) the chain is Cytoplasmic. The helical transmembrane segment at 180–200 (LISVTLFAVHCSGCFNYLIAD) threads the bilayer. Topologically, residues 201–227 (RYPNPARTWIGAAIPNYRSQNLWVRYV) are extracellular. Residues 228-247 (TAIYWSITTLTTTGYGDLHA) constitute an intramembrane region (pore-forming). Residues 248–251 (ENQR) are Extracellular-facing. A helical membrane pass occupies residues 252–272 (EMLFSICYMLFNLGLTAYLIG). The Cytoplasmic segment spans residues 273–601 (NMTNLVVQGS…DGDHLFFMEI (329 aa)). 356–475 (LFHGVSFTCM…RVILNNLSQK (120 aa)) serves as a coordination point for a nucleoside 3',5'-cyclic phosphate. In terms of domain architecture, KHA spans 530-601 (RVTIHMYSQR…DGDHLFFMEI (72 aa)).

Belongs to the potassium channel family. Plant (TC 1.A.1.4) subfamily.

Its subcellular location is the membrane. In terms of biological role, probable inward-rectifying potassium channel. Assuming opened or closed conformations in response to the voltage difference across the membrane, the channel is activated by hyperpolarization. The chain is Potassium channel KAT2 from Oryza sativa subsp. japonica (Rice).